The following is a 406-amino-acid chain: Cytochrome bc1 complex Rieske iron-sulfur subunit (406 aa).

Helical transmembrane passes span 56–76, 98–118, and 166–186; these read VGIW…VYLF, LLGL…IFYI, and MLGI…GGMV. The region spanning 291–388 is the Rieske domain; sequence HGPRNAVMLI…ITVDEEGYLV (98 aa). [2Fe-2S] cluster contacts are provided by Cys331, His333, Cys350, and His353. Residues Cys336 and Cys352 are joined by a disulfide bond.

It belongs to the Rieske iron-sulfur protein family. The cytochrome bc1 complex is composed of a cytochrome b (QcrB), the Rieske iron-sulfur protein (QcrA) and a diheme cytochrome c (QcrC) subunit. The bc1 complex forms a supercomplex with cytochrome c oxidase (cytochrome aa3). The cofactor is [2Fe-2S] cluster.

The protein localises to the cell membrane. Its function is as follows. Iron-sulfur subunit of the cytochrome bc1 complex, an essential component of the respiratory electron transport chain required for ATP synthesis. The bc1 complex catalyzes the oxidation of menaquinol and the reduction of cytochrome c in the respiratory chain. The bc1 complex operates through a Q-cycle mechanism that couples electron transfer to generation of the proton gradient that drives ATP synthesis. This chain is Cytochrome bc1 complex Rieske iron-sulfur subunit (qcrA), found in Corynebacterium diphtheriae (strain ATCC 700971 / NCTC 13129 / Biotype gravis).